The following is a 362-amino-acid chain: Patr class I histocompatibility antigen, B-2 alpha chain (362 aa).

Positions 1–24 (MQVTAPRTVLLLLSAALALTETWA) are cleaved as a signal peptide. The interval 25–114 (GSHSMKYFYT…LRGYYNQSEA (90 aa)) is alpha-1. The Extracellular segment spans residues 25–308 (GSHSMKYFYT…EPSSQSTIPI (284 aa)). Asn-110 carries an N-linked (GlcNAc...) asparagine glycan. An alpha-2 region spans residues 115–206 (GSHIIQRMYG…ENGKETLQRA (92 aa)). Intrachain disulfides connect Cys-125–Cys-188 and Cys-227–Cys-283. An alpha-3 region spans residues 207–298 (DPPKTHVTHH…GLPKPLTLRW (92 aa)). An Ig-like C1-type domain is found at 209–295 (PKTHVTHHPI…QHEGLPKPLT (87 aa)). The tract at residues 299–308 (EPSSQSTIPI) is connecting peptide. The helical transmembrane segment at 309–332 (VGIVAGLAVLAVVVIGAVVAAVMC) threads the bilayer. At 333–362 (RRKSSGGKGGSYSQAASSDSAQGSDVSLTA) the chain is on the cytoplasmic side. The disordered stretch occupies residues 336-362 (SSGGKGGSYSQAASSDSAQGSDVSLTA). Positions 343 to 362 (SYSQAASSDSAQGSDVSLTA) are enriched in low complexity.

The protein belongs to the MHC class I family. In terms of assembly, heterodimer of an alpha chain and a beta chain (beta-2-microglobulin).

The protein localises to the membrane. In terms of biological role, involved in the presentation of foreign antigens to the immune system. The sequence is that of Patr class I histocompatibility antigen, B-2 alpha chain from Pan troglodytes (Chimpanzee).